The following is a 363-amino-acid chain: Probable matrix metalloproteinase 095L (363 aa).

The first 25 residues, 1-25, serve as a signal peptide directing secretion; sequence MSVDSFTSRLAVVMTAVVLVWWAQA. A propeptide spans 26 to 126 (activation peptide); sequence LPVPSPRRGE…PRCGVPDVSK (101 aa). The short motif at 117–124 is the Cysteine switch element; the sequence is PRCGVPDV. Positions 119 and 275 each coordinate Zn(2+). Glutamate 276 is a catalytic residue. Zn(2+) is bound by residues histidine 279 and histidine 285.

It belongs to the peptidase M10A family. It depends on Zn(2+) as a cofactor.

The protein localises to the secreted. Functionally, probable endopeptidase. The polypeptide is Probable matrix metalloproteinase 095L (Aedes vexans (Inland floodwater mosquito)).